We begin with the raw amino-acid sequence, 250 residues long: Probable transcriptional regulatory protein Cpha266_0538 (250 aa).

Belongs to the TACO1 family.

It localises to the cytoplasm. The protein is Probable transcriptional regulatory protein Cpha266_0538 of Chlorobium phaeobacteroides (strain DSM 266 / SMG 266 / 2430).